The following is a 440-amino-acid chain: UDP-glucose 6-dehydrogenase YwqF (440 aa).

NAD(+) is bound by residues 2-19 (NITV…GVSL), Val11, Asp30, Lys35, Thr121, and Glu155. Residues 151-155 (EFLRE), Lys204, Asn208, 249-253 (FLKAG), and Gly257 each bind substrate. The Nucleophile role is filled by Cys260. An NAD(+)-binding site is contributed by Lys263. Lys320 contacts substrate. Arg327 contacts NAD(+).

Belongs to the UDP-glucose/GDP-mannose dehydrogenase family. In terms of processing, phosphorylated on tyrosine residue(s). Phosphorylated by YwqD and dephosphorylated by YwqE in vitro.

Its subcellular location is the cytoplasm. It carries out the reaction UDP-alpha-D-glucose + 2 NAD(+) + H2O = UDP-alpha-D-glucuronate + 2 NADH + 3 H(+). It participates in nucleotide-sugar biosynthesis; UDP-alpha-D-glucuronate biosynthesis; UDP-alpha-D-glucuronate from UDP-alpha-D-glucose: step 1/1. Its activity is regulated as follows. Competitively inhibited by UDP-glucose. Activated by phosphorylation, which may increase affinity for NAD(+); inhibited by dephosphorylation. In terms of biological role, catalyzes the conversion of UDP-glucose into UDP-glucuronate, one of the precursors of teichuronic acid. The sequence is that of UDP-glucose 6-dehydrogenase YwqF (ywqF) from Bacillus subtilis (strain 168).